We begin with the raw amino-acid sequence, 342 residues long: Cystein proteinase inhibitor protein salarin (342 aa).

The first 19 residues, 1–19, serve as a signal peptide directing secretion; it reads MKSLVLLLLVAVTVSSVVS. N153 carries N-linked (GlcNAc) asparagine glycosylation. T184 carries an O-linked (GlcNAc) threonine glycan.

N-glycosylated, with sialylated biantennary complex-type glycans. In terms of processing, O-glycosylated, with sialylated oligosaccharides.

Its subcellular location is the cytoplasm. It localises to the vacuole. In terms of biological role, inhibits papain and ficin (cysteine proteinases) but not trypsin (a serine proteinase). The polypeptide is Cystein proteinase inhibitor protein salarin (salarin) (Salvelinus alpinus (Arctic char)).